The primary structure comprises 704 residues: Tryptophan synthase (704 aa).

Residues 1 to 292 (MEAIKKVFEQ…QLTPNAETAK (292 aa)) are tryptophan synthase alpha chain. Residues E49 and D60 each act as proton acceptor in the active site. The tract at residues 293–704 (GVENILPARF…HVSSNAIPSK (412 aa)) is tryptophan synthase beta chain. K380 is modified (N6-(pyridoxal phosphate)lysine).

The protein in the N-terminal section; belongs to the TrpA family. In the C-terminal section; belongs to the TrpB family. Pyridoxal 5'-phosphate is required as a cofactor.

It catalyses the reaction (1S,2R)-1-C-(indol-3-yl)glycerol 3-phosphate + L-serine = D-glyceraldehyde 3-phosphate + L-tryptophan + H2O. It participates in amino-acid biosynthesis; L-tryptophan biosynthesis; L-tryptophan from chorismate: step 5/5. This chain is Tryptophan synthase (TRP-1), found in Coprinopsis cinerea (strain Okayama-7 / 130 / ATCC MYA-4618 / FGSC 9003) (Inky cap fungus).